Here is a 191-residue protein sequence, read N- to C-terminus: dTTP/UTP pyrophosphatase (191 aa).

Residue aspartate 69 is the Proton acceptor of the active site.

The protein belongs to the Maf family. YhdE subfamily. A divalent metal cation serves as cofactor.

The protein localises to the cytoplasm. The catalysed reaction is dTTP + H2O = dTMP + diphosphate + H(+). The enzyme catalyses UTP + H2O = UMP + diphosphate + H(+). Nucleoside triphosphate pyrophosphatase that hydrolyzes dTTP and UTP. May have a dual role in cell division arrest and in preventing the incorporation of modified nucleotides into cellular nucleic acids. This chain is dTTP/UTP pyrophosphatase, found in Desulforamulus reducens (strain ATCC BAA-1160 / DSM 100696 / MI-1) (Desulfotomaculum reducens).